The primary structure comprises 259 residues: Ribosomal RNA small subunit methyltransferase A (259 aa).

S-adenosyl-L-methionine-binding residues include Asn-13, Leu-15, Gly-40, Glu-61, Asp-85, and Asn-103.

This sequence belongs to the class I-like SAM-binding methyltransferase superfamily. rRNA adenine N(6)-methyltransferase family. RsmA subfamily.

Its subcellular location is the cytoplasm. The catalysed reaction is adenosine(1518)/adenosine(1519) in 16S rRNA + 4 S-adenosyl-L-methionine = N(6)-dimethyladenosine(1518)/N(6)-dimethyladenosine(1519) in 16S rRNA + 4 S-adenosyl-L-homocysteine + 4 H(+). Specifically dimethylates two adjacent adenosines (A1518 and A1519) in the loop of a conserved hairpin near the 3'-end of 16S rRNA in the 30S particle. May play a critical role in biogenesis of 30S subunits. The chain is Ribosomal RNA small subunit methyltransferase A from Neisseria gonorrhoeae (strain NCCP11945).